Reading from the N-terminus, the 318-residue chain is tRNA-modifying protein YgfZ (318 aa).

Positions 28 and 182 each coordinate folate.

Belongs to the tRNA-modifying YgfZ family.

The protein resides in the cytoplasm. Folate-binding protein involved in regulating the level of ATP-DnaA and in the modification of some tRNAs. It is probably a key factor in regulatory networks that act via tRNA modification, such as initiation of chromosomal replication. This Aliivibrio fischeri (strain ATCC 700601 / ES114) (Vibrio fischeri) protein is tRNA-modifying protein YgfZ.